The following is a 255-amino-acid chain: tRNA (guanine-N(1)-)-methyltransferase (255 aa).

S-adenosyl-L-methionine contacts are provided by residues glycine 113 and 133 to 138 (IGDYVL).

Belongs to the RNA methyltransferase TrmD family. As to quaternary structure, homodimer.

Its subcellular location is the cytoplasm. The enzyme catalyses guanosine(37) in tRNA + S-adenosyl-L-methionine = N(1)-methylguanosine(37) in tRNA + S-adenosyl-L-homocysteine + H(+). Functionally, specifically methylates guanosine-37 in various tRNAs. The polypeptide is tRNA (guanine-N(1)-)-methyltransferase (Salmonella agona (strain SL483)).